The following is a 197-amino-acid chain: UPF0462 protein C4orf33 homolog (197 aa).

The protein belongs to the UPF0462 family.

This is UPF0462 protein C4orf33 homolog from Danio rerio (Zebrafish).